Consider the following 607-residue polypeptide: Developmental gene 1062 protein (607 aa).

Disordered stretches follow at residues 62–84 (LQGQ…HNNQ), 334–451 (ICDD…SNFQ), and 568–602 (DNNT…NDLL). A compositionally biased stretch (low complexity) spans 334-363 (ICDDSSNSSTPSLSSYSNGNNKYNNNNNDS). Residues 364–382 (SESDESDDDDNNDDDDNDS) are compositionally biased toward acidic residues. Composition is skewed to low complexity over residues 383-451 (IDFN…SNFQ) and 568-582 (DNNT…ISVN).

This Dictyostelium discoideum (Social amoeba) protein is Developmental gene 1062 protein (DG1062).